The chain runs to 112 residues: Small ribosomal subunit protein uS17 (112 aa).

It belongs to the universal ribosomal protein uS17 family. As to quaternary structure, part of the 30S ribosomal subunit.

Functionally, one of the primary rRNA binding proteins, it binds specifically to the 5'-end of 16S ribosomal RNA. The polypeptide is Small ribosomal subunit protein uS17 (Thermotoga neapolitana (strain ATCC 49049 / DSM 4359 / NBRC 107923 / NS-E)).